The sequence spans 1474 residues: Alpha-2-macroglobulin (1474 aa).

The first 23 residues, 1–23 (MGKNKLLHPSLVLLLLVLLPTDA), serve as a signal peptide directing secretion. An intrachain disulfide couples Cys48 to Cys86. An N-linked (GlcNAc...) (complex) asparagine glycan is attached at Asn55. N-linked (GlcNAc...) asparagine glycosylation is found at Asn70 and Asn247. 2 disulfide bridges follow: Cys251/Cys299 and Cys269/Cys287. Asn396 and Asn410 each carry an N-linked (GlcNAc...) asparagine glycan. 8 cysteine pairs are disulfide-bonded: Cys470–Cys563, Cys595–Cys771, Cys642–Cys689, Cys821–Cys849, Cys847–Cys883, Cys921–Cys1321, Cys1079–Cys1127, and Cys1352–Cys1467. Residues 690 to 728 (PQLQQYEMHGPEGLRVGFYESDVMGRGHARLVHVEEPHT) form a bait region region. Isoglutamyl lysine isopeptide (Gln-Lys) (interchain with K-? in other proteins) cross-links involve residues Gln693 and Gln694. 3 inhibitory regions span residues 704–709 (RVGFYE), 719–723 (RLVHV), and 730–735 (TVRKYF). Asn869 carries N-linked (GlcNAc...) asparagine glycosylation. A cross-link (isoglutamyl cysteine thioester (Cys-Gln)) is located at residues 972-975 (CGEQ). Asn991 carries an N-linked (GlcNAc...) asparagine glycan. An N-linked (GlcNAc...) (complex) asparagine glycan is attached at Asn1424.

It belongs to the protease inhibitor I39 (alpha-2-macroglobulin) family. As to quaternary structure, homotetramer; disulfide-linked. As to expression, secreted in plasma.

The protein localises to the secreted. Is able to inhibit all four classes of proteinases by a unique 'trapping' mechanism. This protein has a peptide stretch, called the 'bait region' which contains specific cleavage sites for different proteinases. When a proteinase cleaves the bait region, a conformational change is induced in the protein which traps the proteinase. The entrapped enzyme remains active against low molecular weight substrates (activity against high molecular weight substrates is greatly reduced). Following cleavage in the bait region, a thioester bond is hydrolyzed and mediates the covalent binding of the protein to the proteinase. This is Alpha-2-macroglobulin (A2M) from Homo sapiens (Human).